The sequence spans 781 residues: Probable beta-D-xylosidase 5 (781 aa).

The N-terminal stretch at 1 to 23 (MSIRRFVRLSLLIIALVSSLCES) is a signal peptide. Asparagine 43, asparagine 103, and asparagine 123 each carry an N-linked (GlcNAc...) asparagine glycan. Aspartate 291 is an active-site residue. N-linked (GlcNAc...) asparagine glycosylation is found at asparagine 342, asparagine 424, asparagine 504, asparagine 543, asparagine 601, and asparagine 653.

This sequence belongs to the glycosyl hydrolase 3 family.

It localises to the secreted. The protein localises to the extracellular space. The protein resides in the extracellular matrix. In Arabidopsis thaliana (Mouse-ear cress), this protein is Probable beta-D-xylosidase 5 (BXL5).